Consider the following 73-residue polypeptide: Hypotensin-like peptide (73 aa).

The first 25 residues, 1-25, serve as a signal peptide directing secretion; that stretch reads MKMMIAIVFVSILLLMFSLSSTAMG.

In terms of tissue distribution, expressed by the venom gland.

It is found in the secreted. In terms of biological role, may potentiate the hypotensive effect of bradykinin. This Tityus serrulatus (Brazilian scorpion) protein is Hypotensin-like peptide.